The chain runs to 498 residues: Glycerol kinase (498 aa).

Thr11 provides a ligand contact to ADP. Thr11, Ser12, and Ser13 together coordinate ATP. Thr11 contributes to the sn-glycerol 3-phosphate binding site. Arg15 is a binding site for ADP. Sn-glycerol 3-phosphate is bound by residues Arg81, Glu82, Tyr133, and Asp242. 5 residues coordinate glycerol: Arg81, Glu82, Tyr133, Asp242, and Gln243. ADP-binding residues include Thr264 and Gly307. Positions 264, 307, 311, and 408 each coordinate ATP. Positions 408 and 412 each coordinate ADP.

Belongs to the FGGY kinase family.

The catalysed reaction is glycerol + ATP = sn-glycerol 3-phosphate + ADP + H(+). Its pathway is polyol metabolism; glycerol degradation via glycerol kinase pathway; sn-glycerol 3-phosphate from glycerol: step 1/1. Inhibited by fructose 1,6-bisphosphate (FBP). Key enzyme in the regulation of glycerol uptake and metabolism. Catalyzes the phosphorylation of glycerol to yield sn-glycerol 3-phosphate. The chain is Glycerol kinase from Ralstonia nicotianae (strain ATCC BAA-1114 / GMI1000) (Ralstonia solanacearum).